The primary structure comprises 355 residues: MAGLAPEGSQFDARQYDAKMTELLGTEQEEFFTSYDEVYDSFDAMGLQENLLRGIYAYGFEKPSAIQQRGIVPFCKGLDVIQQAQSGTGKTATFCSGVLQQLDYSLVECQALVLAPTRELAQQIEKVMRALGDYLGVKVHACVGGTSVREDQRILQSGVHVVVGTPGRVFDMLRRQSLRPDHIKMFVLDEADEMLSRGFKDQIYDIFQLLPPKIQVGVFSATMPPEALEITRKFMNQPVRILVKRDDVTLEGIKQFYVNVDKEEWKLETLCDLYETLAITQSVIFVNTRRKVDWLTDKMRSRDHTVSATHGDMDQNTRDIIMREFRSGSSRVLITTDLLARGIDVQQVSLVINYD.

Positions 40–68 match the Q motif motif; sequence DSFDAMGLQENLLRGIYAYGFEKPSAIQQ. The 171-residue stretch at 71–241 folds into the Helicase ATP-binding domain; it reads IVPFCKGLDV…RKFMNQPVRI (171 aa). 84–91 serves as a coordination point for ATP; the sequence is AQSGTGKT. Residues 189 to 192 carry the DEAD box motif; it reads DEAD. In terms of domain architecture, Helicase C-terminal spans 252–355; that stretch reads GIKQFYVNVD…QQVSLVINYD (104 aa).

The protein belongs to the DEAD box helicase family. eIF4A subfamily. As to quaternary structure, eIF4F is a multi-subunit complex, the composition of which varies with external and internal environmental conditions. It is composed of at least EIF4A, EIF4E and EIF4G.

The catalysed reaction is ATP + H2O = ADP + phosphate + H(+). Functionally, ATP-dependent RNA helicase which is a subunit of the eIF4F complex involved in cap recognition and is required for mRNA binding to ribosome. In the current model of translation initiation, eIF4A unwinds RNA secondary structures in the 5'-UTR of mRNAs which is necessary to allow efficient binding of the small ribosomal subunit, and subsequent scanning for the initiator codon. This Nicotiana tabacum (Common tobacco) protein is Eukaryotic initiation factor 4A-13.